We begin with the raw amino-acid sequence, 161 residues long: Regulator of ribonuclease activity A (161 aa).

Belongs to the RraA family. In terms of assembly, homotrimer. Binds to both RNA-binding sites in the C-terminal region of Rne and to RhlB.

The protein localises to the cytoplasm. Functionally, globally modulates RNA abundance by binding to RNase E (Rne) and regulating its endonucleolytic activity. Can modulate Rne action in a substrate-dependent manner by altering the composition of the degradosome. Modulates RNA-binding and helicase activities of the degradosome. This Shewanella denitrificans (strain OS217 / ATCC BAA-1090 / DSM 15013) protein is Regulator of ribonuclease activity A.